Here is a 194-residue protein sequence, read N- to C-terminus: Peptidyl-tRNA hydrolase (194 aa).

Tyr-17 serves as a coordination point for tRNA. The active-site Proton acceptor is His-22. TRNA is bound by residues Phe-68, Asn-70, and Asn-116.

Belongs to the PTH family. In terms of assembly, monomer.

The protein resides in the cytoplasm. It catalyses the reaction an N-acyl-L-alpha-aminoacyl-tRNA + H2O = an N-acyl-L-amino acid + a tRNA + H(+). In terms of biological role, hydrolyzes ribosome-free peptidyl-tRNAs (with 1 or more amino acids incorporated), which drop off the ribosome during protein synthesis, or as a result of ribosome stalling. Its function is as follows. Catalyzes the release of premature peptidyl moieties from peptidyl-tRNA molecules trapped in stalled 50S ribosomal subunits, and thus maintains levels of free tRNAs and 50S ribosomes. The protein is Peptidyl-tRNA hydrolase of Histophilus somni (strain 129Pt) (Haemophilus somnus).